A 545-amino-acid polypeptide reads, in one-letter code: 2-succinyl-5-enolpyruvyl-6-hydroxy-3-cyclohexene-1-carboxylate synthase (545 aa).

The protein belongs to the TPP enzyme family. MenD subfamily. As to quaternary structure, homodimer. Requires Mg(2+) as cofactor. Mn(2+) is required as a cofactor. The cofactor is thiamine diphosphate.

The catalysed reaction is isochorismate + 2-oxoglutarate + H(+) = 5-enolpyruvoyl-6-hydroxy-2-succinyl-cyclohex-3-ene-1-carboxylate + CO2. It participates in quinol/quinone metabolism; 1,4-dihydroxy-2-naphthoate biosynthesis; 1,4-dihydroxy-2-naphthoate from chorismate: step 2/7. The protein operates within quinol/quinone metabolism; menaquinone biosynthesis. Catalyzes the thiamine diphosphate-dependent decarboxylation of 2-oxoglutarate and the subsequent addition of the resulting succinic semialdehyde-thiamine pyrophosphate anion to isochorismate to yield 2-succinyl-5-enolpyruvyl-6-hydroxy-3-cyclohexene-1-carboxylate (SEPHCHC). This chain is 2-succinyl-5-enolpyruvyl-6-hydroxy-3-cyclohexene-1-carboxylate synthase, found in Nocardia farcinica (strain IFM 10152).